The chain runs to 95 residues: MSVDQETVKRVSHLARIALHNDEVELMTKELNVILGFVEQLSEVDVSGVEPLTSVMPMTLRMREDSVTDGDKVADIVANAPVTEENFFLVSKVVE.

This sequence belongs to the GatC family. In terms of assembly, heterotrimer of A, B and C subunits.

The enzyme catalyses L-glutamyl-tRNA(Gln) + L-glutamine + ATP + H2O = L-glutaminyl-tRNA(Gln) + L-glutamate + ADP + phosphate + H(+). It carries out the reaction L-aspartyl-tRNA(Asn) + L-glutamine + ATP + H2O = L-asparaginyl-tRNA(Asn) + L-glutamate + ADP + phosphate + 2 H(+). Functionally, allows the formation of correctly charged Asn-tRNA(Asn) or Gln-tRNA(Gln) through the transamidation of misacylated Asp-tRNA(Asn) or Glu-tRNA(Gln) in organisms which lack either or both of asparaginyl-tRNA or glutaminyl-tRNA synthetases. The reaction takes place in the presence of glutamine and ATP through an activated phospho-Asp-tRNA(Asn) or phospho-Glu-tRNA(Gln). The sequence is that of Aspartyl/glutamyl-tRNA(Asn/Gln) amidotransferase subunit C from Bartonella henselae (strain ATCC 49882 / DSM 28221 / CCUG 30454 / Houston 1) (Rochalimaea henselae).